Reading from the N-terminus, the 330-residue chain is Probable transposase for insertion sequence element ISH11 (330 aa).

The protein belongs to the transposase 11 family.

Involved in the transposition of the insertion sequence ISH11. The chain is Probable transposase for insertion sequence element ISH11 from Halobacterium salinarum (strain ATCC 29341 / DSM 671 / R1).